The chain runs to 435 residues: Cysteine--tRNA ligase (435 aa).

C24 is a Zn(2+) binding site. Positions 26–36 (PTVYDHIHIGN) match the 'HIGH' region motif. 3 residues coordinate Zn(2+): C202, H228, and E232. Positions 260 to 264 (KMSKS) match the 'KMSKS' region motif. K263 is a binding site for ATP.

Belongs to the class-I aminoacyl-tRNA synthetase family. As to quaternary structure, monomer. Zn(2+) serves as cofactor.

It localises to the cytoplasm. The enzyme catalyses tRNA(Cys) + L-cysteine + ATP = L-cysteinyl-tRNA(Cys) + AMP + diphosphate. The chain is Cysteine--tRNA ligase from Mycoplasmoides gallisepticum (strain R(low / passage 15 / clone 2)) (Mycoplasma gallisepticum).